The sequence spans 341 residues: Probable membrane-associated kinase regulator 1 (341 aa).

Disordered regions lie at residues 1-29 (MRRQ…FEFN), 67-122 (TLGS…SSRP), 158-185 (PKTN…KRMS), 206-230 (LSPK…NNIR), and 288-310 (RGGF…SVSS). Composition is skewed to low complexity over residues 12 to 29 (PPQS…FEFN), 67 to 108 (TLGS…SFPL), and 167 to 180 (SSSS…APSS). Positions 208-230 (PKQSSNIKTESSSSLKDSGNNIR) are enriched in polar residues. The span at 297 to 310 (SCSSSSSNNNSVSS) shows a compositional bias: low complexity.

A C-terminus-derived peptide binds BRI1 in vitro.

Its subcellular location is the cell membrane. Functionally, may negatively regulate brassinosteroid signaling. In Arabidopsis thaliana (Mouse-ear cress), this protein is Probable membrane-associated kinase regulator 1 (MAKR1).